The sequence spans 226 residues: Leucyl/phenylalanyl-tRNA--protein transferase (226 aa).

This sequence belongs to the L/F-transferase family.

The protein localises to the cytoplasm. The enzyme catalyses N-terminal L-lysyl-[protein] + L-leucyl-tRNA(Leu) = N-terminal L-leucyl-L-lysyl-[protein] + tRNA(Leu) + H(+). It catalyses the reaction N-terminal L-arginyl-[protein] + L-leucyl-tRNA(Leu) = N-terminal L-leucyl-L-arginyl-[protein] + tRNA(Leu) + H(+). The catalysed reaction is L-phenylalanyl-tRNA(Phe) + an N-terminal L-alpha-aminoacyl-[protein] = an N-terminal L-phenylalanyl-L-alpha-aminoacyl-[protein] + tRNA(Phe). Its function is as follows. Functions in the N-end rule pathway of protein degradation where it conjugates Leu, Phe and, less efficiently, Met from aminoacyl-tRNAs to the N-termini of proteins containing an N-terminal arginine or lysine. This Pseudomonas putida (strain W619) protein is Leucyl/phenylalanyl-tRNA--protein transferase.